The following is a 145-amino-acid chain: Globin-1 (145 aa).

A Globin domain is found at 1-145 (GISADQAKAL…VIVPGMKAGY (145 aa)). Residues His-63 and His-92 each coordinate heme b.

The protein belongs to the globin family. Monomer.

This is Globin-1 from Liolophura japonica (Chiton).